The following is a 143-amino-acid chain: MYNLKVKKLNDDAIIPNFAHKGDAGMDLYSIEEVVIPPGETKLIKTGICIELPTMTEAQVRPRSGLALKHSVTVLNTPGTIDEGYRGELKIILINHGKNDFKVEKHMKIAQMIVKPIYDINIEEVKELSDSERGKGGFGSTGF.

Residues 63-65 (RSG), Asn-76, 80-82 (TID), and Lys-90 each bind substrate.

The protein belongs to the dUTPase family. Requires Mg(2+) as cofactor.

The enzyme catalyses dUTP + H2O = dUMP + diphosphate + H(+). It functions in the pathway pyrimidine metabolism; dUMP biosynthesis; dUMP from dCTP (dUTP route): step 2/2. Its function is as follows. This enzyme is involved in nucleotide metabolism: it produces dUMP, the immediate precursor of thymidine nucleotides and it decreases the intracellular concentration of dUTP so that uracil cannot be incorporated into DNA. In Clostridioides difficile (Peptoclostridium difficile), this protein is Deoxyuridine 5'-triphosphate nucleotidohydrolase.